The following is an 89-amino-acid chain: Conotoxin Bu5 (89 aa).

Residues 1 to 22 (MKLTCVLIVAVLFLTACQLATA) form the signal peptide. Residues 23 to 49 (ENSREEQGYSAVRSSDQIQDSDLKLTK) constitute a propeptide that is removed on maturation. 3 disulfide bridges follow: C51/C66, C58/C70, and C65/C79. At C79 the chain carries Cysteine amide. The propeptide occupies 80–89 (GVSIDYYDSR).

This sequence belongs to the conotoxin O1 superfamily. As to expression, expressed by the venom duct.

It is found in the secreted. The protein is Conotoxin Bu5 of Conus bullatus (Bubble cone).